The sequence spans 632 residues: Epithelial sodium channel subunit alpha (632 aa).

At 1–49 the chain is on the cytoplasmic side; that stretch reads MTKEEKNEKEALIEFFSSYRELFEFFCSNTTIHGAIRLVCSRRNRMKTA. A helical transmembrane segment spans residues 50–70; it reads FWLVLFLVTFGLMYWQFGLLF. Residues 71-520 lie on the Extracellular side of the membrane; it reads GQYFSYPVSI…SQWSLWFGSS (450 aa). 10 cysteine pairs are disulfide-bonded: Cys-97–Cys-264, Cys-189–Cys-196, Cys-241–Cys-248, Cys-355–Cys-440, Cys-377–Cys-417, Cys-377–Cys-436, Cys-381–Cys-432, Cys-390–Cys-417, Cys-390–Cys-440, and Cys-392–Cys-406. The chain crosses the membrane as a helical span at residues 521-541; it reads VLSVVEMLELVIDFVIIGVMI. The Cytoplasmic segment spans residues 542–632; sequence LLHRYYYKKA…YYEENGGRRN (91 aa). Over residues 612-622 the composition is skewed to low complexity; the sequence is SRSSSMRSNRS. The segment at 612–632 is disordered; it reads SRSSSMRSNRSYYEENGGRRN. Basic and acidic residues predominate over residues 623–632; it reads YYEENGGRRN.

It belongs to the amiloride-sensitive sodium channel (TC 1.A.6) family. SCNN1A subfamily. Heterotrimer; containing an alpha/SCNN1A, a beta/SCNN1B and a gamma/SCNN1G subunit. Interacts with shroom1.

The protein resides in the apical cell membrane. Its subcellular location is the cell projection. It is found in the cilium. It localises to the cytoplasmic granule. The protein localises to the cytoplasm. The protein resides in the cytoplasmic vesicle. Its subcellular location is the secretory vesicle. It is found in the acrosome. It localises to the flagellum. It catalyses the reaction Na(+)(in) = Na(+)(out). Its activity is regulated as follows. Originally identified and characterized by its inhibition by the diuretic drug amiloride. This is one of the three pore-forming subunits of the heterotrimeric epithelial sodium channel (ENaC), a critical regulator of sodium balance and fluid homeostasis. ENaC operates in epithelial tissues, where it mediates the electrodiffusion of sodium ions from extracellular fluid through the apical membrane of cells, with water following osmotically. It plays a key role in maintaining sodium homeostasis through electrogenic sodium reabsorption in the kidneys. The sequence is that of Epithelial sodium channel subunit alpha from Xenopus laevis (African clawed frog).